The primary structure comprises 465 residues: UDP-N-acetylmuramate--L-alanine ligase (465 aa).

125–131 (GTHGKTT) is an ATP binding site.

This sequence belongs to the MurCDEF family.

The protein localises to the cytoplasm. It carries out the reaction UDP-N-acetyl-alpha-D-muramate + L-alanine + ATP = UDP-N-acetyl-alpha-D-muramoyl-L-alanine + ADP + phosphate + H(+). Its pathway is cell wall biogenesis; peptidoglycan biosynthesis. In terms of biological role, cell wall formation. The chain is UDP-N-acetylmuramate--L-alanine ligase from Deinococcus geothermalis (strain DSM 11300 / CIP 105573 / AG-3a).